Here is a 336-residue protein sequence, read N- to C-terminus: HTH-type transcriptional repressor PurR (336 aa).

The region spanning 2-56 (ATIKDVARLAGVSTTTVSHVINKTRFVAETTQEKVMEAVKQLNYAPSAVARSLKC) is the HTH lacI-type domain. Residues 4 to 23 (IKDVARLAGVSTTTVSHVIN) constitute a DNA-binding region (H-T-H motif). Residues 48–56 (SAVARSLKC) mediate DNA binding. The hypoxanthine site is built by F73, K189, F220, and D274.

As to quaternary structure, homodimer.

Its pathway is purine metabolism; purine nucleotide biosynthesis [regulation]. In terms of biological role, is the main repressor of the genes involved in the de novo synthesis of purine nucleotides, regulating purB, purC, purEK, purF, purHD, purL, purMN and guaBA expression. PurR is allosterically activated to bind its cognate DNA by binding the purine corepressors, hypoxanthine or guanine, thereby effecting transcription repression. This Vibrio cholerae serotype O1 (strain ATCC 39315 / El Tor Inaba N16961) protein is HTH-type transcriptional repressor PurR.